A 141-amino-acid chain; its full sequence is Cystatin (141 aa).

The first 26 residues, 1–26 (MVHSQLPVAASLRLLCALLLLPSATM), serve as a signal peptide directing secretion. One can recognise a Cystatin domain in the interval 29 to 129 (GGLSPRSVTD…CRFQVWSRPW (101 aa)). The Secondary area of contact motif lies at 73–77 (QVVAG). Cystine bridges form between C91/C107 and C120/C140.

This sequence belongs to the cystatin family. In terms of tissue distribution, expressed by the venom gland at an extremely low level (at protein level).

Its subcellular location is the secreted. In terms of biological role, inhibits various C1 cysteine proteases including cathepsin L, papain and cathepsin B. This protein has no toxic activity and its function in the venom is unknown. It may play a role as a housekeeping or regulatory protein. This Cryptophis nigrescens (Eastern small-eyed snake) protein is Cystatin.